Reading from the N-terminus, the 240-residue chain is Putative truncated effector protein hopW1-2 (240 aa).

Residues 1-32 (MSPAQIIRTSHSFPPSFTGTSSSAENSHAQSP) are disordered. Residues 9–23 (TSHSFPPSFTGTSSS) show a composition bias toward low complexity.

The protein belongs to the HopW family.

The sequence is that of Putative truncated effector protein hopW1-2 (hopW1-2) from Pseudomonas syringae pv. maculicola.